A 541-amino-acid polypeptide reads, in one-letter code: Chaperonin GroEL 2 (541 aa).

ATP is bound by residues 29-32, 86-90, G414, 478-480, and D494; these read TLGP, DGTTT, and DAA.

It belongs to the chaperonin (HSP60) family. Forms a cylinder of 14 subunits composed of two heptameric rings stacked back-to-back. Interacts with the co-chaperonin GroES.

It is found in the cytoplasm. It carries out the reaction ATP + H2O + a folded polypeptide = ADP + phosphate + an unfolded polypeptide.. Its function is as follows. Together with its co-chaperonin GroES, plays an essential role in assisting protein folding. The GroEL-GroES system forms a nano-cage that allows encapsulation of the non-native substrate proteins and provides a physical environment optimized to promote and accelerate protein folding. The chain is Chaperonin GroEL 2 from Frankia casuarinae (strain DSM 45818 / CECT 9043 / HFP020203 / CcI3).